Consider the following 1157-residue polypeptide: DNA-directed RNA polymerase subunit beta (1157 aa).

It belongs to the RNA polymerase beta chain family. The RNAP catalytic core consists of 2 alpha, 1 beta, 1 beta' and 1 omega subunit. When a sigma factor is associated with the core the holoenzyme is formed, which can initiate transcription.

It carries out the reaction RNA(n) + a ribonucleoside 5'-triphosphate = RNA(n+1) + diphosphate. Its function is as follows. DNA-dependent RNA polymerase catalyzes the transcription of DNA into RNA using the four ribonucleoside triphosphates as substrates. The protein is DNA-directed RNA polymerase subunit beta of Tropheryma whipplei (Whipple's bacillus).